The primary structure comprises 179 residues: MSEKDFVQVAKLGKTVGLKGYVKLHNLSDFSSQFKKDATFFIKNTKEMLKIKHYNASNSTVLFENYEDIEKAKELTNLILFQSIEKSRQTCKLKKDEFFYFDILECEVFEEDKRLGKVVDILETGASYLFEIQSDEKWVEKKYPKIFFIPYLDKFVKNIDIEKRQIFCTQDAFLILENS.

Residues 95–174 form the PRC barrel domain; the sequence is KDEFFYFDIL…QIFCTQDAFL (80 aa).

The protein belongs to the RimM family. As to quaternary structure, binds ribosomal protein uS19.

It localises to the cytoplasm. Its function is as follows. An accessory protein needed during the final step in the assembly of 30S ribosomal subunit, possibly for assembly of the head region. Essential for efficient processing of 16S rRNA. May be needed both before and after RbfA during the maturation of 16S rRNA. It has affinity for free ribosomal 30S subunits but not for 70S ribosomes. The chain is Ribosome maturation factor RimM from Campylobacter jejuni subsp. doylei (strain ATCC BAA-1458 / RM4099 / 269.97).